Here is a 254-residue protein sequence, read N- to C-terminus: Probable derlin-2 homolog (254 aa).

At 1-17 (MAQPFEDWYKNLPIVTK) the chain is on the cytoplasmic side. A helical membrane pass occupies residues 18 to 38 (IYMTGCVVTSVSVYLGLVGPL). At 39-95 (RLYLNFPLVFGKYEFWRLFTNFFFYDEIGMNFFFHMYFLVRHSRLLEESSFRGRSAD) the chain is on the lumenal side. The chain crosses the membrane as a helical span at residues 96–116 (YLFMWIFGSFLLLIMDAFLFY). Residues 117–118 (TK) are Cytoplasmic-facing. A helical membrane pass occupies residues 119 to 139 (IVTKVLFLAPSIAFMVIYVWS). Residues 140–146 (RRNPNMH) lie on the Lumenal side of the membrane. Residues 147-167 (ISFLGLFTFSAPYLPWVILIM) traverse the membrane as a helical segment. The Cytoplasmic segment spans residues 168–254 (GYLFNHDLTT…FLNEDDLDQQ (87 aa)).

This sequence belongs to the derlin family.

Its subcellular location is the endoplasmic reticulum membrane. Its function is as follows. May be involved in the degradation process of specific misfolded endoplasmic reticulum (ER) luminal proteins. May also be involved in endoplasmic reticulum stress-induced pre-emptive quality control, a mechanism that selectively attenuates the translocation of newly synthesized proteins into the endoplasmic reticulum and reroutes them to the cytosol for proteasomal degradation. The protein is Probable derlin-2 homolog (derl2) of Dictyostelium discoideum (Social amoeba).